Reading from the N-terminus, the 281-residue chain is Ribosomal RNA small subunit methyltransferase A (281 aa).

Residues N36, L38, G63, E84, D109, and N127 each coordinate S-adenosyl-L-methionine.

The protein belongs to the class I-like SAM-binding methyltransferase superfamily. rRNA adenine N(6)-methyltransferase family. RsmA subfamily.

It is found in the cytoplasm. It catalyses the reaction adenosine(1518)/adenosine(1519) in 16S rRNA + 4 S-adenosyl-L-methionine = N(6)-dimethyladenosine(1518)/N(6)-dimethyladenosine(1519) in 16S rRNA + 4 S-adenosyl-L-homocysteine + 4 H(+). Functionally, specifically dimethylates two adjacent adenosines (A1518 and A1519) in the loop of a conserved hairpin near the 3'-end of 16S rRNA in the 30S particle. May play a critical role in biogenesis of 30S subunits. The protein is Ribosomal RNA small subunit methyltransferase A of Borreliella afzelii (strain PKo) (Borrelia afzelii).